Consider the following 292-residue polypeptide: Zinc finger protein OZF (292 aa).

C2H2-type zinc fingers lie at residues 16–38 (FACK…EHFH), 44–66 (FECN…QNTH), 72–94 (LECN…QKIH), 100–122 (FECK…QRTH), 128–150 (FICK…EKIH), 156–178 (FKCN…QNIH), 184–206 (YECN…VRIH), 212–234 (YECN…VRSH), 240–262 (YGCN…LRIH), and 268–290 (YQCS…QKIH). Glycyl lysine isopeptide (Lys-Gly) (interchain with G-Cter in SUMO2) cross-links involve residues K28, K51, and K56. Residues K157 and K169 each participate in a glycyl lysine isopeptide (Lys-Gly) (interchain with G-Cter in SUMO) cross-link. Residue K173 forms a Glycyl lysine isopeptide (Lys-Gly) (interchain with G-Cter in SUMO2) linkage. The interval 212–292 (YECNVCGKAF…HIRHQKIHTH (81 aa)) is interaction with TERF2IP.

It belongs to the krueppel C2H2-type zinc-finger protein family. Binds DNA. Interacts with SUMO conjugating enzyme UBC9/UBE2I. Interacts with the telomeric protein TERF2IP.

Its subcellular location is the nucleus. The chain is Zinc finger protein OZF (ZNF146) from Bos taurus (Bovine).